We begin with the raw amino-acid sequence, 101 residues long: NADH-ubiquinone oxidoreductase chain 4L (101 aa).

3 helical membrane-spanning segments follow: residues 5-25 (LNCT…IFLN), 29-49 (ILVM…NLIF), and 64-84 (LLIL…LVIY).

The protein belongs to the complex I subunit 4L family.

It localises to the mitochondrion membrane. It carries out the reaction a ubiquinone + NADH + 5 H(+)(in) = a ubiquinol + NAD(+) + 4 H(+)(out). Core subunit of the mitochondrial membrane respiratory chain NADH dehydrogenase (Complex I) that is believed to belong to the minimal assembly required for catalysis. Complex I functions in the transfer of electrons from NADH to the respiratory chain. The immediate electron acceptor for the enzyme is believed to be ubiquinone. The polypeptide is NADH-ubiquinone oxidoreductase chain 4L (ND4L) (Chondrus crispus (Carrageen Irish moss)).